Reading from the N-terminus, the 121-residue chain is Large ribosomal subunit protein eL34A (121 aa).

The protein belongs to the eukaryotic ribosomal protein eL34 family. Component of the large ribosomal subunit (LSU). Mature yeast ribosomes consist of a small (40S) and a large (60S) subunit. The 40S small subunit contains 1 molecule of ribosomal RNA (18S rRNA) and 33 different proteins (encoded by 57 genes). The large 60S subunit contains 3 rRNA molecules (25S, 5.8S and 5S rRNA) and 46 different proteins (encoded by 81 genes).

Its subcellular location is the cytoplasm. Its function is as follows. Component of the ribosome, a large ribonucleoprotein complex responsible for the synthesis of proteins in the cell. The small ribosomal subunit (SSU) binds messenger RNAs (mRNAs) and translates the encoded message by selecting cognate aminoacyl-transfer RNA (tRNA) molecules. The large subunit (LSU) contains the ribosomal catalytic site termed the peptidyl transferase center (PTC), which catalyzes the formation of peptide bonds, thereby polymerizing the amino acids delivered by tRNAs into a polypeptide chain. The nascent polypeptides leave the ribosome through a tunnel in the LSU and interact with protein factors that function in enzymatic processing, targeting, and the membrane insertion of nascent chains at the exit of the ribosomal tunnel. The polypeptide is Large ribosomal subunit protein eL34A (Saccharomyces cerevisiae (strain ATCC 204508 / S288c) (Baker's yeast)).